We begin with the raw amino-acid sequence, 265 residues long: Exosome complex component Rrp4 (265 aa).

An S1 motif domain is found at 65–137 (GDNVIGKIVD…EVNNIDLTTK (73 aa)). In terms of domain architecture, KH spans 147–205 (KGGQIVKITPSRVPRVIGRGGSMINMIKKLTMTRIIVGQNGWIWVSGKNDALEKLAIEA). The interval 241-265 (EIPKLEEEPQGEDEVNGNDGEARGA) is disordered.

Belongs to the RRP4 family. In terms of assembly, component of the archaeal exosome complex. Forms a trimer of Rrp4 and/or Csl4 subunits. The trimer associates with a hexameric ring-like arrangement composed of 3 Rrp41-Rrp42 heterodimers.

Its subcellular location is the cytoplasm. Non-catalytic component of the exosome, which is a complex involved in RNA degradation. Increases the RNA binding and the efficiency of RNA degradation. Confers strong poly(A) specificity to the exosome. This Pyrococcus abyssi (strain GE5 / Orsay) protein is Exosome complex component Rrp4.